A 491-amino-acid chain; its full sequence is Katanin p60 ATPase-containing subunit A1 (491 aa).

The tract at residues 1–29 (MSLLMISENVKLAREYALLGNYDSAMVYY) is interaction with KATNB1. Residues 1–75 (MSLLMISENV…VKDIMKTLES (75 aa)) form an interaction with dynein and NDEL1 region. The tract at residues 1–185 (MSLLMISENV…EPETNKFDST (185 aa)) is interaction with microtubules. Residues S42 and S109 each carry the phosphoserine; by DYRK2 modification. Residues 87 to 185 (QHDLPASEGE…EPETNKFDST (99 aa)) are disordered. Positions 117 to 144 (SSQYSDPKSHGNRPSTTVRVHRSSAQNV) are enriched in polar residues. At T133 the chain carries Phosphothreonine; by DYRK2. Residues 145-169 (HNDRGKAVRCREKKEQNKGREEKNK) are compositionally biased toward basic and acidic residues. A Phosphoserine modification is found at S170. Position 249–256 (249–256 (GPPGTGKT)) interacts with ATP.

This sequence belongs to the AAA ATPase family. Katanin p60 subunit A1 subfamily. In terms of assembly, can homooligomerize into hexameric rings, which may be promoted by interaction with microtubules. Interacts with KATNB1, which may serve as a targeting subunit. Interacts with ASPM; the katanin complex formation KATNA1:KATNB1 is required for the association of ASPM. Interacts with dynein and NDEL1. Associates with the E3 ligase complex containing DYRK2, EDD/UBR5, DDB1 and DCAF1 proteins (EDVP complex). Interacts with KLHL42 (via the kelch domains). Interacts with CUL3; the interaction is enhanced by KLHL42. Interacts with KATNB1 and KATNBL1. Interacts with CAMSAP2 and CAMSAP3; leading to regulate the length of CAMSAP-decorated microtubule stretches. In terms of processing, phosphorylation by DYRK2 triggers ubiquitination and subsequent degradation. Post-translationally, ubiquitinated by the BCR(KLHL42) E3 ubiquitin ligase complex, leading to its proteasomal degradation. Ubiquitinated by the EDVP E3 ligase complex and subsequently targeted for proteasomal degradation.

Its subcellular location is the cytoplasm. It is found in the midbody. The protein resides in the cytoskeleton. It localises to the microtubule organizing center. The protein localises to the centrosome. Its subcellular location is the spindle pole. It is found in the spindle. It catalyses the reaction n ATP + n H2O + a microtubule = n ADP + n phosphate + (n+1) alpha/beta tubulin heterodimers.. With respect to regulation, ATPase activity is stimulated by microtubules, which promote homooligomerization. ATP-dependent microtubule severing is stimulated by interaction with KATNB1. Its function is as follows. Catalytic subunit of a complex which severs microtubules in an ATP-dependent manner. Microtubule severing may promote rapid reorganization of cellular microtubule arrays and the release of microtubules from the centrosome following nucleation. Microtubule release from the mitotic spindle poles may allow depolymerization of the microtubule end proximal to the spindle pole, leading to poleward microtubule flux and poleward motion of chromosome. Microtubule release within the cell body of neurons may be required for their transport into neuronal processes by microtubule-dependent motor proteins. This transport is required for axonal growth. The sequence is that of Katanin p60 ATPase-containing subunit A1 from Homo sapiens (Human).